Here is a 512-residue protein sequence, read N- to C-terminus: Maturase K (512 aa).

It belongs to the intron maturase 2 family. MatK subfamily.

It is found in the plastid. The protein resides in the chloroplast. Usually encoded in the trnK tRNA gene intron. Probably assists in splicing its own and other chloroplast group II introns. In Filarum manserichense, this protein is Maturase K.